Reading from the N-terminus, the 385-residue chain is 1-deoxy-D-xylulose 5-phosphate reductoisomerase (385 aa).

Positions 10, 11, 12, 13, 37, and 124 each coordinate NADPH. Lys125 provides a ligand contact to 1-deoxy-D-xylulose 5-phosphate. Glu126 serves as a coordination point for NADPH. Residue Asp150 participates in Mn(2+) binding. 1-deoxy-D-xylulose 5-phosphate is bound by residues Ser151, Glu152, Ser176, and His199. Glu152 lines the Mn(2+) pocket. Gly205 provides a ligand contact to NADPH. 4 residues coordinate 1-deoxy-D-xylulose 5-phosphate: Ser212, Asn217, Lys218, and Glu221. Glu221 contacts Mn(2+).

This sequence belongs to the DXR family. It depends on Mg(2+) as a cofactor. Requires Mn(2+) as cofactor.

It carries out the reaction 2-C-methyl-D-erythritol 4-phosphate + NADP(+) = 1-deoxy-D-xylulose 5-phosphate + NADPH + H(+). It participates in isoprenoid biosynthesis; isopentenyl diphosphate biosynthesis via DXP pathway; isopentenyl diphosphate from 1-deoxy-D-xylulose 5-phosphate: step 1/6. Its function is as follows. Catalyzes the NADPH-dependent rearrangement and reduction of 1-deoxy-D-xylulose-5-phosphate (DXP) to 2-C-methyl-D-erythritol 4-phosphate (MEP). The chain is 1-deoxy-D-xylulose 5-phosphate reductoisomerase from Clostridium botulinum (strain Kyoto / Type A2).